Reading from the N-terminus, the 457-residue chain is UDP-N-acetylmuramate--L-alanyl-gamma-D-glutamyl-meso-2,6-diaminoheptandioate ligase (457 aa).

110-116 (GTHGKTT) contributes to the ATP binding site.

This sequence belongs to the MurCDEF family. Mpl subfamily. Mg(2+) serves as cofactor.

It localises to the secreted. It carries out the reaction UDP-N-acetyl-alpha-D-muramate + L-alanyl-gamma-D-glutamyl-meso-2,6-diaminopimelate + ATP = UDP-N-acetyl-alpha-D-muramoyl-L-alanyl-gamma-D-glutamyl-meso-2,6-diaminopimelate + ADP + phosphate + H(+). It participates in cell wall biogenesis; peptidoglycan recycling. Reutilizes the intact tripeptide L-alanyl-gamma-D-glutamyl-meso-diaminopimelate by linking it to UDP-N-acetylmuramate. The enzyme can also use the tetrapeptide L-alanyl-gamma-D-glutamyl-meso-2,6-diaminoheptanedioyl-D-alanine or the pentapeptide L-alanyl-gamma-D-glutamyl-meso-2,6-diaminoheptandioyl-D-alanyl-D-alanine in vivo and in vitro. The polypeptide is UDP-N-acetylmuramate--L-alanyl-gamma-D-glutamyl-meso-2,6-diaminoheptandioate ligase (Escherichia coli (strain K12)).